A 914-amino-acid polypeptide reads, in one-letter code: Transcription factor AZF1 (914 aa).

Disordered stretches follow at residues 1-63 (MPPP…ESIS), 93-124 (STGG…SQIG), and 138-275 (QQLQ…NSNQ). The span at 13–34 (QAGQNESQNQSSGEAGEQNQEH) shows a compositional bias: polar residues. Low complexity predominate over residues 44–56 (QSQPASSQPQHQQ). Phosphoserine is present on Ser-61. Polar residues predominate over residues 107-116 (PRLSTSSTHQ). A polyglutamine domain region spans residues 136 to 158 (QQQQLQNQHRQQQQQQQQQSHQQ). Over residues 138–158 (QQLQNQHRQQQQQQQQQSHQQ) the composition is skewed to low complexity. Positions 164–194 (PSFSTGLTGSSSQYQFLPRNDNTSQPPSKRN) are enriched in polar residues. 2 stretches are compositionally biased toward low complexity: residues 206-222 (FEFF…FQPS) and 245-275 (SNGT…NSNQ). 2 positions are modified to phosphoserine: Ser-286 and Ser-325. Positions 326 to 415 (LSVNNKANGD…STDTTSNSRK (90 aa)) are disordered. Residues 359 to 390 (DSSNNNNNNNNNNNNENNNDNNNDNNDNSINS) are compositionally biased toward low complexity. A polyasparagine domain region spans residues 362–386 (NNNNNNNNNNNNENNNDNNNDNNDN). The segment covering 391 to 412 (ATSTNIPNQEDHSLASTDTTSN) has biased composition (polar residues). C2H2-type zinc fingers lie at residues 593-615 (HECP…VRSH), 621-643 (FVCD…ERLH), 649-671 (YSCD…LVTH), and 677-702 (FVCK…NRFH). 2 disordered regions span residues 743–812 (GIKG…SPTQ) and 853–877 (RLGS…APGV). Residues 754-770 (KKSTISSPENHPASTIL) are compositionally biased toward polar residues. Composition is skewed to low complexity over residues 771 to 782 (NPNTNANNAIAN), 796 to 809 (SSSN…SMIS), and 856 to 868 (SSSS…NNSN).

It localises to the nucleus. It is found in the cytoplasm. The protein localises to the cytosol. Its function is as follows. Transcription factor involved in the diauxic shift. In the presence of glucose, activates carbon and energy metabolism genes, and in te presence of glycerol-lactate, activates genes needed for cell wall maintenance. Binds to DNA elements with the sequence AAAAGAAA (A4GA3), a motif enriched in the promoters of AZF1-sensitive genes. Required for glucose induction of CLN3 transcription. Also required for proper FLO11 expression. May also function as a corepressor. As an intrinsically disordered protein, AZF1 is capable of forming the prion [AZF1+] that confers resistance to the drug radicicol in a gain-of-function manner but decreases the expression of AZF1's target genes. This is Transcription factor AZF1 from Saccharomyces cerevisiae (strain ATCC 204508 / S288c) (Baker's yeast).